An 80-amino-acid chain; its full sequence is UPF0291 protein LCA_1274 (80 aa).

Residues 59–80 (EGKEVTPEKVKDIQREKGLRDD) are disordered.

It belongs to the UPF0291 family.

It is found in the cytoplasm. The chain is UPF0291 protein LCA_1274 from Latilactobacillus sakei subsp. sakei (strain 23K) (Lactobacillus sakei subsp. sakei).